Here is a 209-residue protein sequence, read N- to C-terminus: Thymidylate kinase (209 aa).

10-17 (GLDGAGKS) lines the ATP pocket.

It belongs to the thymidylate kinase family.

The catalysed reaction is dTMP + ATP = dTDP + ADP. In terms of biological role, phosphorylation of dTMP to form dTDP in both de novo and salvage pathways of dTTP synthesis. The protein is Thymidylate kinase of Francisella tularensis subsp. novicida (strain U112).